We begin with the raw amino-acid sequence, 148 residues long: Cell division protein SepF (148 aa).

Residues methionine 1 to proline 59 form a disordered region. The span at methionine 33–valine 48 shows a compositional bias: polar residues.

It belongs to the SepF family. As to quaternary structure, homodimer. Interacts with FtsZ.

It localises to the cytoplasm. Cell division protein that is part of the divisome complex and is recruited early to the Z-ring. Probably stimulates Z-ring formation, perhaps through the cross-linking of FtsZ protofilaments. Its function overlaps with FtsA. The polypeptide is Cell division protein SepF (Lactobacillus delbrueckii subsp. bulgaricus (strain ATCC BAA-365 / Lb-18)).